The following is a 939-amino-acid chain: MEQLAKSYEPGDLERRWYQHWEQAGYFKPSMDTSKPSFAIQLPPPNVTGTLHMGHAFNQTIMDGLTRFYRMKGHNTLWVPGTDHAGIATQIVVERQLADQGLNRHDMGREAFTSKIWEWKEKSGGTITSQMRRVGCSVDWDREYFTMDDVRAEVVTEVFVRLYEQGLIYRGKRLSNWDAKLGTAISDLEVVSEEEDGHMWHIKYPVVGSDEFVTVATTRPETLLGDVAVAIAPDDERYLHLVGKQLELPLTGRTIPVIADSYVDKEFGTGFVKITPAHDFNDYEVGKRHGTQLINVMSLEAKILAKAQIFGFDGSAQGAIELPAAYAGLTAQEARKAMLADLQAQGLLLETKPHKLMVPRGDRTGTVIEPLLTDQWFVAMNKVAEGDATGQSIAAKAIEAVESGEVRFVPENWVNTYNQWMKNIQDWCISRQLWWGHQIPAWYDEDGNIYVGRTEAEAQAKAGGKTLRREQDVLDTWFSSALVPFSTLGWPEETPDLKAFLTSNVLVTGYEIIFFWVARMIMMTKHFTGKVPFKDVYIHGMVRDHEGKKMSKSEGNVIDPVDLIDGIALEPLVEKRTTGLRRPEKAPQIAKATEKLFPEGIPAYGTDALRFTMASYATLGRSVNFDFKRAEGYRNFCNKLWNATRFVMMNVDGKDCGQDESLPLEYSFVDQWIIGRLQQAEIDVTNALETYRFDIAAQVIYEFIWNEYCDWYVELAKVQIQGGNEAQQRATRRTLVRVLEVALRLNHPLMPFITEELWQTVAPLANAKKTESLMLAPWPVADESKISAAANARMEAFKDMVNAVRNLRGEMGIGPAVKAPLFIETADASIADFVPYLKLLARLTEGTLVAKLPEDDAPVAMSGEARLMLKVEVDKAAETARLRKEQGKVEAELAKLTAKLEKPGYVDKAPAHLVERDKAQLAELNDKLEKIRVQLVKLA.

Residues 45–55 (PNVTGTLHMGH) carry the 'HIGH' region motif. The 'KMSKS' region signature appears at 549-553 (KMSKS). Lys-552 is an ATP binding site. A coiled-coil region spans residues 876–939 (AAETARLRKE…KIRVQLVKLA (64 aa)).

Belongs to the class-I aminoacyl-tRNA synthetase family. ValS type 1 subfamily. Monomer.

The protein localises to the cytoplasm. It carries out the reaction tRNA(Val) + L-valine + ATP = L-valyl-tRNA(Val) + AMP + diphosphate. Its function is as follows. Catalyzes the attachment of valine to tRNA(Val). As ValRS can inadvertently accommodate and process structurally similar amino acids such as threonine, to avoid such errors, it has a 'posttransfer' editing activity that hydrolyzes mischarged Thr-tRNA(Val) in a tRNA-dependent manner. The polypeptide is Valine--tRNA ligase (Chromobacterium violaceum (strain ATCC 12472 / DSM 30191 / JCM 1249 / CCUG 213 / NBRC 12614 / NCIMB 9131 / NCTC 9757 / MK)).